Reading from the N-terminus, the 81-residue chain is Beta-catenin-interacting protein 1 (81 aa).

Ser-59 is modified (phosphoserine).

The protein belongs to the CTNNBIP1 family. In terms of assembly, binds CTNNB1.

The protein localises to the cytoplasm. It localises to the nucleus. Functionally, prevents the interaction between CTNNB1 and TCF family members, and acts as a negative regulator of the Wnt signaling pathway. In Homo sapiens (Human), this protein is Beta-catenin-interacting protein 1 (CTNNBIP1).